The sequence spans 65 residues: Sec-independent protein translocase protein TatA (65 aa).

The chain crosses the membrane as a helical span at residues 1 to 21 (MFGLGGQELVLILLIILLLFG).

The protein belongs to the TatA/E family. Forms a complex with TatC.

Its subcellular location is the cell inner membrane. Functionally, part of the twin-arginine translocation (Tat) system that transports large folded proteins containing a characteristic twin-arginine motif in their signal peptide across membranes. TatA could form the protein-conducting channel of the Tat system. This is Sec-independent protein translocase protein TatA from Chlorobium phaeobacteroides (strain DSM 266 / SMG 266 / 2430).